The sequence spans 288 residues: Small ribosomal subunit protein uS2 (288 aa).

Positions 228–288 are disordered; sequence RAGLSSDKDA…PAAEAPSTEA (61 aa). Positions 257 to 288 are enriched in low complexity; the sequence is QAAPAAEAAPAAEAQAAPAAEAPAAEAPSTEA.

Belongs to the universal ribosomal protein uS2 family.

This chain is Small ribosomal subunit protein uS2, found in Rhodococcus opacus (strain B4).